The chain runs to 256 residues: MDRSGYFPVLDEDIPTKSELRLPLESKTSSRSRRWLHLVLVLQFVLIISLLASLHILGNRQPSNITCAKQLSPYSPYLEDGDLELEEFTELNHLMQPSPYRGQPTPEIEEAWVRLWRVPMIGFPETKMINLNKTNPQDYAHVSTRYGDDMLGFLNVFHQLHCLNLVRQYTYRDDYDYSNVTAFRAPQELVRGHIDHCIETIRKSIMCASDVTPVVFQLDDSRKSGFKSDFNMRRTCRNFDKIQDWAVANAVQGDFE.

A helical transmembrane segment spans residues 38–58; it reads LVLVLQFVLIISLLASLHILG. N-linked (GlcNAc...) asparagine glycans are attached at residues asparagine 64 and asparagine 132. The HXXHC 1 signature appears at 158-162; that stretch reads HQLHC. An N-linked (GlcNAc...) asparagine glycan is attached at asparagine 179. The short motif at 193 to 197 is the HXXHC 2 element; sequence HIDHC.

The protein belongs to the ustYa family.

It localises to the membrane. The protein operates within mycotoxin biosynthesis. Functionally, ustYa family oxidase; part of the gene cluster that mediates the biosynthesis of the phomopsins, a group of hexapeptide mycotoxins which infects lupins and causes lupinosis disease in livestock. Within the pathway, phomYc catalyzes the desaturation of the Ile moiety into 2,3-dehydroisoleucine (dIle). The pathway starts with the processing of the precursor phomA by several endopeptidases including kexin proteases as well as the cluster-specific S41 family peptidase phomP1 and the oligopeptidase phomG to produce 10 identical copies of the hexapeptide Tyr-Val-Ile-Pro-Ile-Asp. After being excised from the precursor peptide, the core peptides are cyclized and modified post-translationally by enzymes encoded within the gene cluster. The timing and order of proteolysis of the phomA precursor and PTMs are still unknown. Two tyrosinase-like enzymes, phomQ1 and phomQ2, catalyze the chlorination and hydroxylation of Tyr, respectively. PhomYb, is proposed to be involved in the construction of the macrocyclic structure. The other 4 ustYa family proteins may be involved in PTMs that generate the unique structure of phomopsin A. PhomYa is required for the hydroxylation of C-beta of Tyr. PhomYc, phomYd, and phomYe are responsible for the biosynthesis of 2,3-dehydroisoleucine (dIle), 2,3-dehydroaspartic acid (dAsp), and 3,4-dehydroproline (dPro), respectively. While dIle formation by phomYc is indispensable for the installation of dAsp by phomYd, the order of the other PTMs have not been elucidated yet. Most of the biosynthetic enzymes likely have broad substrate specificity, and thus, there might be a metabolic grid from a precursor to phomopsin A. The enzyme(s) responsible for the biosynthesis of 3,4-dehydrovaline (dVal) have also not been identified yet. Finally, phomM acts as an S-adenosylmethionine-dependent alpha-N-methyltransferase that catalyzes two successive N-methylation reactions, converting N-desmethyl-phomopsin A to phomopsin A and phomopsin A further to an N,N-dimethylated congener called phomopsin E. The sequence is that of UstYa family oxidase phomYc from Diaporthe leptostromiformis (Lupinosis disease fungus).